The chain runs to 271 residues: Tetraspanin-11 (271 aa).

Residues M1 to F7 are Cytoplasmic-facing. A helical transmembrane segment spans residues M8–I28. Topologically, residues Y29–R44 are extracellular. A helical membrane pass occupies residues I45–S65. The Cytoplasmic segment spans residues C66 to Y76. The helical transmembrane segment at L77–V97 threads the bilayer. Residues T98 to N236 are Extracellular-facing. N185 and N195 each carry an N-linked (GlcNAc...) asparagine glycan. A helical membrane pass occupies residues L237–C257. Topologically, residues A258–V271 are cytoplasmic.

This sequence belongs to the tetraspanin (TM4SF) family.

The protein resides in the membrane. Functionally, may be involved in the regulation of cell differentiation. This Arabidopsis thaliana (Mouse-ear cress) protein is Tetraspanin-11 (TET11).